An 847-amino-acid chain; its full sequence is Glycogen phosphorylase, liver form (847 aa).

Residue A2 is modified to N-acetylalanine. S15 is subject to Phosphoserine; by PHK; in form phosphorylase a. Residues 43-45, Y76, and R310 each bind AMP; that span reads DRN. N6-succinyllysine is present on K364. N6-acetyllysine is present on K470. A phosphoserine mark is found at S524, S561, and S639. K681 carries the N6-(pyridoxal phosphate)lysine modification. The residue at position 796 (K796) is an N6-acetyllysine.

Belongs to the glycogen phosphorylase family. As to quaternary structure, homodimer; enzymatically active. Interacts with PPP1R3B; recruits the phosphatase PP1 which dephosphorylates and inactivates PYGL/glycogen phosphorylase. Requires pyridoxal 5'-phosphate as cofactor. Post-translationally, acetylation, which is up-regulated by glucose and insulin and down-regulated by glucagon, inhibits the glycogen phosphorylase activity by promoting PPP1R3B-mediated recruitment of phosphatase PP1 and Ser-15 dephosphorylation. In terms of processing, phosphorylation at Ser-15 converts inactive phosphorylase b into active phosphorylase a. Dephosphorylation of Ser-15 by phosphatase PP1 inactivates the enzyme.

Its subcellular location is the cytoplasm. The protein localises to the cytosol. The enzyme catalyses [(1-&gt;4)-alpha-D-glucosyl](n) + phosphate = [(1-&gt;4)-alpha-D-glucosyl](n-1) + alpha-D-glucose 1-phosphate. Allosterically regulated through the non-covalent binding of metabolites, being activated by AMP and inhibited by ATP, ADP, and glucose-6-phosphate. The activity is also controlled by post-translational modifications including phosphorylation and acetylation. Allosteric enzyme that catalyzes the rate-limiting step in glycogen catabolism, the phosphorolytic cleavage of glycogen to produce glucose-1-phosphate, and plays a central role in maintaining cellular and organismal glucose homeostasis. The polypeptide is Glycogen phosphorylase, liver form (Homo sapiens (Human)).